A 486-amino-acid chain; its full sequence is Bifunctional protein HldE (486 aa).

The segment at 1-329 (MSSRLSGLLD…AALSVAGPVG (329 aa)) is ribokinase. 204–207 (NAFE) is a binding site for ATP. Residue Asp-274 is part of the active site. Positions 355 to 486 (FTNGCFDILH…AIIARSETGK (132 aa)) are cytidylyltransferase.

The protein in the N-terminal section; belongs to the carbohydrate kinase PfkB family. This sequence in the C-terminal section; belongs to the cytidylyltransferase family. In terms of assembly, homodimer.

It carries out the reaction D-glycero-beta-D-manno-heptose 7-phosphate + ATP = D-glycero-beta-D-manno-heptose 1,7-bisphosphate + ADP + H(+). The catalysed reaction is D-glycero-beta-D-manno-heptose 1-phosphate + ATP + H(+) = ADP-D-glycero-beta-D-manno-heptose + diphosphate. It participates in nucleotide-sugar biosynthesis; ADP-L-glycero-beta-D-manno-heptose biosynthesis; ADP-L-glycero-beta-D-manno-heptose from D-glycero-beta-D-manno-heptose 7-phosphate: step 1/4. Its pathway is nucleotide-sugar biosynthesis; ADP-L-glycero-beta-D-manno-heptose biosynthesis; ADP-L-glycero-beta-D-manno-heptose from D-glycero-beta-D-manno-heptose 7-phosphate: step 3/4. Its function is as follows. Catalyzes the phosphorylation of D-glycero-D-manno-heptose 7-phosphate at the C-1 position to selectively form D-glycero-beta-D-manno-heptose-1,7-bisphosphate. In terms of biological role, catalyzes the ADP transfer from ATP to D-glycero-beta-D-manno-heptose 1-phosphate, yielding ADP-D-glycero-beta-D-manno-heptose. The protein is Bifunctional protein HldE of Hyphomonas neptunium (strain ATCC 15444).